We begin with the raw amino-acid sequence, 365 residues long: tRNA/tmRNA (uracil-C(5))-methyltransferase (365 aa).

Residues Gln-189, Tyr-217, Asn-222, Glu-238, and Asp-298 each coordinate S-adenosyl-L-methionine. Residue Cys-323 is the Nucleophile of the active site. Catalysis depends on Glu-357, which acts as the Proton acceptor.

Belongs to the class I-like SAM-binding methyltransferase superfamily. RNA M5U methyltransferase family. TrmA subfamily.

The enzyme catalyses uridine(54) in tRNA + S-adenosyl-L-methionine = 5-methyluridine(54) in tRNA + S-adenosyl-L-homocysteine + H(+). The catalysed reaction is uridine(341) in tmRNA + S-adenosyl-L-methionine = 5-methyluridine(341) in tmRNA + S-adenosyl-L-homocysteine + H(+). In terms of biological role, dual-specificity methyltransferase that catalyzes the formation of 5-methyluridine at position 54 (m5U54) in all tRNAs, and that of position 341 (m5U341) in tmRNA (transfer-mRNA). This chain is tRNA/tmRNA (uracil-C(5))-methyltransferase, found in Shewanella piezotolerans (strain WP3 / JCM 13877).